We begin with the raw amino-acid sequence, 276 residues long: Rhomboid protease GlpG (276 aa).

The next 6 helical transmembrane spans lie at 94–114, 142–162, 169–189, 192–212, 229–249, and 250–270; these read GPFT…MNVV, ALMH…WYLG, LGSG…GYVQ, FSGP…GYAW, LITF…GMSI, and ANGA…ADTL. The active-site Nucleophile is the Ser201. The active site involves His254.

Belongs to the peptidase S54 family.

Its subcellular location is the cell inner membrane. The catalysed reaction is Cleaves type-1 transmembrane domains using a catalytic dyad composed of serine and histidine that are contributed by different transmembrane domains.. Its function is as follows. Rhomboid-type serine protease that catalyzes intramembrane proteolysis. In Enterobacter sp. (strain 638), this protein is Rhomboid protease GlpG.